We begin with the raw amino-acid sequence, 294 residues long: UPF0761 membrane protein YPTS_0028 (294 aa).

Helical transmembrane passes span 44-64 (LLSL…FPMF), 67-87 (ISIK…GDII), 108-128 (GLIV…NIIW), 136-156 (LVFS…LVGA), 185-205 (VFPL…VPTV), 212-232 (ALIG…GFAM), and 246-266 (VLAV…IVLL).

Belongs to the UPF0761 family.

It localises to the cell inner membrane. This is UPF0761 membrane protein YPTS_0028 from Yersinia pseudotuberculosis serotype IB (strain PB1/+).